A 68-amino-acid chain; its full sequence is MTMDQGLNPKQFFLDDVVLQDTLCSMSNRVNKSVKTGYLFPKDHVPSANIIAVERRGGLSDIGKNTSN.

Its subcellular location is the cytoplasm. The protein resides in the nucleus. Functionally, involved in the MEC1-mediated checkpoint response to DNA damage and replication arrest. This chain is MEC1-mediated checkpoint protein HUG1 (HUG1), found in Saccharomyces cerevisiae (strain ATCC 204508 / S288c) (Baker's yeast).